Here is a 193-residue protein sequence, read N- to C-terminus: Ribosomal RNA small subunit methyltransferase G (193 aa).

S-adenosyl-L-methionine-binding positions include Gly72, Phe77, 123 to 124 (IE), and Arg137.

This sequence belongs to the methyltransferase superfamily. RNA methyltransferase RsmG family.

It is found in the cytoplasm. It catalyses the reaction guanosine(527) in 16S rRNA + S-adenosyl-L-methionine = N(7)-methylguanosine(527) in 16S rRNA + S-adenosyl-L-homocysteine. Specifically methylates the N7 position of guanine in position 527 of 16S rRNA. The protein is Ribosomal RNA small subunit methyltransferase G of Wolinella succinogenes (strain ATCC 29543 / DSM 1740 / CCUG 13145 / JCM 31913 / LMG 7466 / NCTC 11488 / FDC 602W) (Vibrio succinogenes).